Reading from the N-terminus, the 362-residue chain is Glutaminase-asparaginase (362 aa).

Positions 1–25 (MKSALKTFVPGALALLLLFPVAAQA) are cleaved as a signal peptide. Residues 35–362 (ANVVILATGG…KELQRMFWEY (328 aa)) form the Asparaginase/glutaminase domain. T45 functions as the Acyl-ester intermediate in the catalytic mechanism. Substrate is bound by residues S92 and 125 to 126 (TD).

It belongs to the asparaginase 1 family. Homotetramer.

The protein localises to the periplasm. The enzyme catalyses L-glutamine + H2O = L-glutamate + NH4(+). It carries out the reaction L-asparagine + H2O = L-aspartate + NH4(+). This is Glutaminase-asparaginase from Pseudomonas fluorescens biotype A.